The chain runs to 226 residues: ATP-dependent dethiobiotin synthetase BioD (226 aa).

Residue 12–17 participates in ATP binding; that stretch reads GIGKTV. Mg(2+) is bound at residue threonine 16. Residue lysine 37 is part of the active site. Threonine 41 is a substrate binding site. ATP contacts are provided by residues aspartate 49, 108–111, 169–170, and 197–199; these read EGAG, GS, and PAG. The Mg(2+) site is built by aspartate 49 and glutamate 108.

This sequence belongs to the dethiobiotin synthetase family. Homodimer. Mg(2+) serves as cofactor.

It localises to the cytoplasm. It catalyses the reaction (7R,8S)-7,8-diammoniononanoate + CO2 + ATP = (4R,5S)-dethiobiotin + ADP + phosphate + 3 H(+). Its pathway is cofactor biosynthesis; biotin biosynthesis; biotin from 7,8-diaminononanoate: step 1/2. Its function is as follows. Catalyzes a mechanistically unusual reaction, the ATP-dependent insertion of CO2 between the N7 and N8 nitrogen atoms of 7,8-diaminopelargonic acid (DAPA, also called 7,8-diammoniononanoate) to form a ureido ring. In Mycolicibacterium gilvum (strain PYR-GCK) (Mycobacterium gilvum (strain PYR-GCK)), this protein is ATP-dependent dethiobiotin synthetase BioD.